The chain runs to 495 residues: Internal alternative NAD(P)H-ubiquinone oxidoreductase A1, mitochondrial (495 aa).

The transit peptide at 1 to 41 (MPWFKNLIKISKTITNQSSSYKSITPLASPLLTQFLQFTKQ) directs the protein to the mitochondrion. 61-91 (RIVVLGSGWAGCRLMKDIDTNIYDVVCVSPR) is an FAD binding site. 228–264 (LHCVVVGGGPTGVEFSGELSDFILKDVHQRYAHVKDY) lines the NAD(+) pocket. Residues 486–495 (LVFGRDISRI) carry the Microbody targeting signal motif.

It belongs to the NADH dehydrogenase family. It depends on FAD as a cofactor.

It is found in the mitochondrion inner membrane. Its subcellular location is the peroxisome. The enzyme catalyses a quinone + NADH + H(+) = a quinol + NAD(+). The catalysed reaction is a ubiquinone + NADH + H(+) = a ubiquinol + NAD(+). Its function is as follows. Alternative NADH-ubiquinone oxidoreductase which catalyzes the oxidation of mitochondrial NADH does not translocate protons across the inner mitochondrial membrane. The chain is Internal alternative NAD(P)H-ubiquinone oxidoreductase A1, mitochondrial (NDA1) from Solanum tuberosum (Potato).